Reading from the N-terminus, the 166-residue chain is Phospholipase A2 inhibitor B1 (166 aa).

The first 19 residues, 1–19 (MRLILLSGLLLLGTFLVNG), serve as a signal peptide directing secretion. One can recognise a C-type lectin domain in the interval 46–161 (LFHAFLTVHK…CDDNLLVVCE (116 aa)). Intrachain disulfides connect cysteine 83–cysteine 160 and cysteine 138–cysteine 152. Residue asparagine 122 is glycosylated (N-linked (GlcNAc...) asparagine).

Belongs to the alpha-type phospholipase A2 inhibitor family. Homotrimer; non-covalently linked. In terms of tissue distribution, expressed by the liver.

The protein localises to the secreted. In terms of biological role, this phospholipase A2 inhibitor binds directly phospholipase A2 in the presence or absence of calcium. This is Phospholipase A2 inhibitor B1 from Crotalus durissus terrificus (South American rattlesnake).